A 581-amino-acid polypeptide reads, in one-letter code: Proline--tRNA ligase (581 aa).

The protein belongs to the class-II aminoacyl-tRNA synthetase family. ProS type 1 subfamily. Homodimer.

The protein localises to the cytoplasm. The enzyme catalyses tRNA(Pro) + L-proline + ATP = L-prolyl-tRNA(Pro) + AMP + diphosphate. Its function is as follows. Catalyzes the attachment of proline to tRNA(Pro) in a two-step reaction: proline is first activated by ATP to form Pro-AMP and then transferred to the acceptor end of tRNA(Pro). As ProRS can inadvertently accommodate and process non-cognate amino acids such as alanine and cysteine, to avoid such errors it has two additional distinct editing activities against alanine. One activity is designated as 'pretransfer' editing and involves the tRNA(Pro)-independent hydrolysis of activated Ala-AMP. The other activity is designated 'posttransfer' editing and involves deacylation of mischarged Ala-tRNA(Pro). The misacylated Cys-tRNA(Pro) is not edited by ProRS. The chain is Proline--tRNA ligase from Acidovorax ebreus (strain TPSY) (Diaphorobacter sp. (strain TPSY)).